Here is a 253-residue protein sequence, read N- to C-terminus: MAGHSKFKNIQHRKGAQDKKRAKVFTKLIREIVTAAKTGSSNNPENNPRLRNALTAARSQNLPKERIDKALNSANESSNNENYTEIRYEGYAPNGIAIIVEALTDNKNRTAAEVRSSFTKYGGSLGETGSVNYLFNHCGVIQYPINIASNEDVLEAVIEAGGHDIISDDTTHTIYTDVENFSKVLDFFTGKYGIPEDSYIGWIPLNTIIIDDKEKAAKLLKLVEVLEESDDVQRVFGNYELSDDVYEIIQGEP.

The disordered stretch occupies residues 1–21; the sequence is MAGHSKFKNIQHRKGAQDKKR.

This sequence belongs to the TACO1 family.

The protein localises to the cytoplasm. This is Probable transcriptional regulatory protein A1G_04400 from Rickettsia rickettsii (strain Sheila Smith).